Consider the following 956-residue polypeptide: uncharacterized protein (956 aa).

The next 6 helical transmembrane spans lie at 40 to 60, 104 to 124, 137 to 157, 166 to 186, 264 to 284, and 301 to 321; these read SGIV…LPIV, FLLG…TTIL, AILA…AVLF, WYFL…YLVY, YVIG…SVLI, and FSLL…FDYL. A disordered region spans residues 580-609; it reads NHYGLPEALDSSLESEEENLDPEEDIDPEI. Residues 592-609 are compositionally biased toward acidic residues; it reads LESEEENLDPEEDIDPEI. Residues 640-672 are a coiled coil; it reads KSVIQKQAAEKAEEERKAEEEKLLAVRNAKKKG.

Belongs to the ycf78 family.

It localises to the plastid. Its subcellular location is the chloroplast membrane. This is an uncharacterized protein from Nephroselmis olivacea (Green alga).